Reading from the N-terminus, the 252-residue chain is Large ribosomal subunit protein uL29m (252 aa).

The transit peptide at 1-39 (MSTSTVIRPVARSLLQLRKAGNTPPAFLLPCLQSSSTTS) directs the protein to the mitochondrion. The span at 233-242 (EDVLAEAEGE) shows a compositional bias: acidic residues. The tract at residues 233–252 (EDVLAEAEGEAEPKPAQVTA) is disordered.

It belongs to the universal ribosomal protein uL29 family. In terms of assembly, component of the mitochondrial large ribosomal subunit. Mature mitochondrial ribosomes consist of a small (37S) and a large (54S) subunit. The 37S subunit contains at least 33 different proteins and 1 molecule of RNA (15S). The 54S subunit contains at least 45 different proteins and 1 molecule of RNA (21S).

It localises to the mitochondrion. This chain is Large ribosomal subunit protein uL29m (mrpl4), found in Botryotinia fuckeliana (strain B05.10) (Noble rot fungus).